Reading from the N-terminus, the 468-residue chain is Microtubule-associated tyrosine carboxypeptidase 1 (468 aa).

Over residues 1 to 10 (MVLDSGTQVY) the composition is skewed to polar residues. Disordered stretches follow at residues 1-39 (MVLD…PPLY) and 77-112 (MKRS…TLRP). Zn(2+) is bound at residue His277. Residue Glu278 is the Nucleophile of the active site. 2 residues coordinate Zn(2+): His282 and Glu313.

It belongs to the peptidase MATCAP family. Zn(2+) serves as cofactor.

Its subcellular location is the cytoplasm. It localises to the cytoskeleton. It carries out the reaction C-terminal L-alpha-aminoacyl-L-glutamyl-L-glutamyl-L-tyrosyl-[tubulin] + H2O = C-terminal L-alpha-aminoacyl-L-glutamyl-L-glutamyl-[tubulin] + L-tyrosine. It catalyses the reaction C-terminal L-alpha-aminoacyl-L-glutamyl-L-glutamyl-L-phenylalanyl-[tubulin] + H2O = C-terminal L-alpha-aminoacyl-L-glutamyl-L-glutamyl-[tubulin] + L-phenylalanine. In terms of biological role, tyrosine carboxypeptidase that removes the C-terminal tyrosine residue of alpha-tubulin, thereby regulating microtubule dynamics and function. Also able to remove the C-terminal phenylalanine residue of alpha-tubulin TUBA8. Recognizes adjacent tubulin dimers along the same protofilament. The sequence is that of Microtubule-associated tyrosine carboxypeptidase 1 from Rattus norvegicus (Rat).